The primary structure comprises 437 residues: Lipid II isoglutaminyl synthase (glutamine-hydrolyzing) subunit MurT (437 aa).

Zn(2+)-binding residues include cysteine 202, cysteine 205, cysteine 224, and cysteine 226. Aspartate 349 is a catalytic residue.

The protein belongs to the MurCDEF family. MurT subfamily. As to quaternary structure, forms a heterodimer with GatD.

The catalysed reaction is beta-D-GlcNAc-(1-&gt;4)-Mur2Ac(oyl-L-Ala-gamma-D-Glu-L-Lys-D-Ala-D-Ala)-di-trans,octa-cis-undecaprenyl diphosphate + L-glutamine + ATP + H2O = beta-D-GlcNAc-(1-&gt;4)-Mur2Ac(oyl-L-Ala-D-isoglutaminyl-L-Lys-D-Ala-D-Ala)-di-trans,octa-cis-undecaprenyl diphosphate + L-glutamate + ADP + phosphate + H(+). It carries out the reaction beta-D-GlcNAc-(1-&gt;4)-Mur2Ac(oyl-L-Ala-gamma-D-Glu-L-Lys-D-Ala-D-Ala)-di-trans,octa-cis-undecaprenyl diphosphate + ATP = beta-D-GlcNAc-(1-&gt;4)-Mur2Ac(oyl-L-Ala-gamma-D-O-P-Glu-L-Lys-D-Ala-D-Ala)-di-trans,octa-cis-undecaprenyl diphosphate + ADP. It catalyses the reaction beta-D-GlcNAc-(1-&gt;4)-Mur2Ac(oyl-L-Ala-gamma-D-O-P-Glu-L-Lys-D-Ala-D-Ala)-di-trans,octa-cis-undecaprenyl diphosphate + NH4(+) = beta-D-GlcNAc-(1-&gt;4)-Mur2Ac(oyl-L-Ala-D-isoglutaminyl-L-Lys-D-Ala-D-Ala)-di-trans,octa-cis-undecaprenyl diphosphate + phosphate + H(+). It functions in the pathway cell wall biogenesis; peptidoglycan biosynthesis. The lipid II isoglutaminyl synthase complex catalyzes the formation of alpha-D-isoglutamine in the cell wall lipid II stem peptide. The MurT subunit catalyzes the ATP-dependent amidation of D-glutamate residue of lipid II, converting it to an isoglutamine residue. The sequence is that of Lipid II isoglutaminyl synthase (glutamine-hydrolyzing) subunit MurT from Staphylococcus aureus (strain N315).